The primary structure comprises 94 residues: Co-chaperonin GroES (94 aa).

The protein belongs to the GroES chaperonin family. In terms of assembly, heptamer of 7 subunits arranged in a ring. Interacts with the chaperonin GroEL.

It is found in the cytoplasm. Its function is as follows. Together with the chaperonin GroEL, plays an essential role in assisting protein folding. The GroEL-GroES system forms a nano-cage that allows encapsulation of the non-native substrate proteins and provides a physical environment optimized to promote and accelerate protein folding. GroES binds to the apical surface of the GroEL ring, thereby capping the opening of the GroEL channel. In Orientia tsutsugamushi (Rickettsia tsutsugamushi), this protein is Co-chaperonin GroES.